Here is a 173-residue protein sequence, read N- to C-terminus: Ribosome maturation factor RimP (173 aa).

Belongs to the RimP family.

Its subcellular location is the cytoplasm. Its function is as follows. Required for maturation of 30S ribosomal subunits. In Chlorobium phaeobacteroides (strain DSM 266 / SMG 266 / 2430), this protein is Ribosome maturation factor RimP.